The sequence spans 168 residues: Prespore-specific protein A (168 aa).

The N-terminal stretch at 1–19 is a signal peptide; sequence MKFQHTFIALLSLLTYANA. O-linked (GlcNAc) threonine glycans are attached at residues Thr-110, Thr-114, Thr-116, Thr-118, Thr-120, Thr-122, Thr-124, Thr-126, Thr-128, Thr-130, Thr-132, Thr-134, and Thr-138. 3 consecutive repeat copies span residues 116–119, 120–123, and 124–127. Residues 116–127 form a 3 X 4 AA tandem repeats of T-P-T-V region; the sequence is TPTVTPTVTPTV. Positions 116 to 131 are enriched in low complexity; that stretch reads TPTVTPTVTPTVTPTP. Residues 116-147 form a disordered region; the sequence is TPTVTPTVTPTVTPTPTNTPNPTPSQTSTTTG. O-linked (GlcNAc) serine glycosylation is present at Ser-140. The GPI-like-anchor amidated glycine moiety is linked to residue Gly-147. Residues 148 to 168 constitute a propeptide, removed in mature form; sequence SASTVVASLSLIIFSMILSLC.

The protein belongs to the ponticulin family. In terms of processing, O-glycosylated in the repeat region. The oligosaccharides contain N-acetylglucosamine and fucose as the major constituents. The GPI-like-anchor contains a phosphoceramide group, rather than a phosphatidyl group.

It is found in the cell membrane. In terms of biological role, may bind F-actin and nucleates actin assembly. This Dictyostelium discoideum (Social amoeba) protein is Prespore-specific protein A (pspA).